The sequence spans 463 residues: Chaperone SurA (463 aa).

The N-terminal stretch at 1–25 is a signal peptide; the sequence is MTKPFSVVLASLLAITSTVSPLASA. PpiC domains follow at residues 174–276 and 289–388; these read GSQY…KLVE and VTEY…QRVG. Disordered stretches follow at residues 329–348 and 431–463; these read ATAKESSEDTNSRGQGGDLG and YRTGDRADDNATAAPAKSPDPAAPSPPPAKPTR. Low complexity predominate over residues 441–450; that stretch reads ATAAPAKSPD. The span at 451–463 shows a compositional bias: pro residues; the sequence is PAAPSPPPAKPTR.

Its subcellular location is the periplasm. It carries out the reaction [protein]-peptidylproline (omega=180) = [protein]-peptidylproline (omega=0). Its function is as follows. Chaperone involved in the correct folding and assembly of outer membrane proteins. Recognizes specific patterns of aromatic residues and the orientation of their side chains, which are found more frequently in integral outer membrane proteins. May act in both early periplasmic and late outer membrane-associated steps of protein maturation. The chain is Chaperone SurA from Xanthomonas axonopodis pv. citri (strain 306).